The chain runs to 279 residues: Pantothenate synthetase (279 aa).

26 to 33 (MGNLHDGH) serves as a coordination point for ATP. H33 acts as the Proton donor in catalysis. Q57 contributes to the (R)-pantoate binding site. Q57 contributes to the beta-alanine binding site. ATP is bound at residue 144-147 (GKKD). A (R)-pantoate-binding site is contributed by Q150. Position 181 to 184 (181 to 184 (LSSR)) interacts with ATP.

The protein belongs to the pantothenate synthetase family. As to quaternary structure, homodimer.

The protein resides in the cytoplasm. It catalyses the reaction (R)-pantoate + beta-alanine + ATP = (R)-pantothenate + AMP + diphosphate + H(+). It functions in the pathway cofactor biosynthesis; (R)-pantothenate biosynthesis; (R)-pantothenate from (R)-pantoate and beta-alanine: step 1/1. Its function is as follows. Catalyzes the condensation of pantoate with beta-alanine in an ATP-dependent reaction via a pantoyl-adenylate intermediate. The protein is Pantothenate synthetase of Janthinobacterium sp. (strain Marseille) (Minibacterium massiliensis).